The chain runs to 207 residues: Cyclic di-AMP synthase CdaS (207 aa).

Residues 13–37 (AFKGKIQVYLEQILGDASLILKTLH) adopt a coiled-coil conformation. The DAC domain maps to 63–205 (SFYLQSYIEE…DGVLYPLISP (143 aa)).

The protein belongs to the adenylate cyclase family. DacB/CdaS subfamily. Forms dimers and probably also hexamers; the dimer may be active while the hexamer may not be active.

It carries out the reaction 2 ATP = 3',3'-c-di-AMP + 2 diphosphate. In terms of biological role, one of 3 paralogous diadenylate cyclases (DAC) in this bacteria, catalyzing the condensation of 2 ATP molecules into cyclic di-AMP (c-di-AMP). Upon expression in E.coli leads to c-di-AMP synthesis. Overexpression of the hyperactive mutant (L44F) in the absence of c-di-AMP phosphodiesterase GdpP leads to growth defects in log phase (long curly cell filaments) that disappear upon sporulation; spore formation is normal, showing sporulation is insensitive to the excess c-di-AMP. In B.subtilis c-di-AMP is a second messenger that mediates growth, DNA repair and cell wall homeostasis; it is toxic when present in excess. This Bacillus subtilis (strain 168) protein is Cyclic di-AMP synthase CdaS.